A 156-amino-acid polypeptide reads, in one-letter code: MPRKGNIPKREVLPDPMYGSKVVTKLINNLMVDGKKGKSQRIVYDAFAIVAEKTGEEALEVFNKAMDNIMPVLEVKARRVGGANYQVPIEVRPERRQTLGLRWLVKYTRARGEKGMVEKLAKEIMDAANNTGASVKKKEDTHKMAEANKAFAHYRW.

The protein belongs to the universal ribosomal protein uS7 family. As to quaternary structure, part of the 30S ribosomal subunit. Contacts proteins S9 and S11.

One of the primary rRNA binding proteins, it binds directly to 16S rRNA where it nucleates assembly of the head domain of the 30S subunit. Is located at the subunit interface close to the decoding center, probably blocks exit of the E-site tRNA. This is Small ribosomal subunit protein uS7 from Clostridioides difficile (strain 630) (Peptoclostridium difficile).